The following is a 134-amino-acid chain: Ribonuclease VapC11 (134 aa).

The PINc domain occupies 2 to 126 (ILIDTSAWVE…ADFDVIARIT (125 aa)). Positions 5 and 98 each coordinate Mg(2+).

The protein belongs to the PINc/VapC protein family. Requires Mg(2+) as cofactor.

Toxic component of a type II toxin-antitoxin (TA) system. Acts as an RNase. Its toxic effects on cell growth and colony formation are neutralized by coexpression with cognate antitoxin VapB11. The chain is Ribonuclease VapC11 from Mycobacterium tuberculosis (strain CDC 1551 / Oshkosh).